Reading from the N-terminus, the 157-residue chain is Ribosomal RNA large subunit methyltransferase H (157 aa).

Residues Leu73, Gly105, and 124 to 129 (LSLMTF) contribute to the S-adenosyl-L-methionine site.

It belongs to the RNA methyltransferase RlmH family. As to quaternary structure, homodimer.

Its subcellular location is the cytoplasm. The catalysed reaction is pseudouridine(1915) in 23S rRNA + S-adenosyl-L-methionine = N(3)-methylpseudouridine(1915) in 23S rRNA + S-adenosyl-L-homocysteine + H(+). Its function is as follows. Specifically methylates the pseudouridine at position 1915 (m3Psi1915) in 23S rRNA. This is Ribosomal RNA large subunit methyltransferase H from Flavobacterium johnsoniae (strain ATCC 17061 / DSM 2064 / JCM 8514 / BCRC 14874 / CCUG 350202 / NBRC 14942 / NCIMB 11054 / UW101) (Cytophaga johnsonae).